The following is a 349-amino-acid chain: Probable dual-specificity RNA methyltransferase RlmN (349 aa).

Glu-94 (proton acceptor) is an active-site residue. Residues 100 to 321 (DEDRATLCVS…TQHGVFATIR (222 aa)) enclose the Radical SAM core domain. Residues Cys-107 and Cys-332 are joined by a disulfide bond. [4Fe-4S] cluster-binding residues include Cys-114, Cys-118, and Cys-121. Residues 159–160 (GE), Ser-191, 213–215 (SMH), and His-289 each bind S-adenosyl-L-methionine. The S-methylcysteine intermediate role is filled by Cys-332.

This sequence belongs to the radical SAM superfamily. RlmN family. It depends on [4Fe-4S] cluster as a cofactor.

The protein resides in the cytoplasm. It carries out the reaction adenosine(2503) in 23S rRNA + 2 reduced [2Fe-2S]-[ferredoxin] + 2 S-adenosyl-L-methionine = 2-methyladenosine(2503) in 23S rRNA + 5'-deoxyadenosine + L-methionine + 2 oxidized [2Fe-2S]-[ferredoxin] + S-adenosyl-L-homocysteine. The enzyme catalyses adenosine(37) in tRNA + 2 reduced [2Fe-2S]-[ferredoxin] + 2 S-adenosyl-L-methionine = 2-methyladenosine(37) in tRNA + 5'-deoxyadenosine + L-methionine + 2 oxidized [2Fe-2S]-[ferredoxin] + S-adenosyl-L-homocysteine. Functionally, specifically methylates position 2 of adenine 2503 in 23S rRNA and position 2 of adenine 37 in tRNAs. In Phocaeicola vulgatus (strain ATCC 8482 / DSM 1447 / JCM 5826 / CCUG 4940 / NBRC 14291 / NCTC 11154) (Bacteroides vulgatus), this protein is Probable dual-specificity RNA methyltransferase RlmN.